The chain runs to 440 residues: MHFLDDNIQIKIDKFYKKNSLNKNRVIVAFSGGADSTTLLLNLKYYLSNNIVAFYFAHFIRTDNEQNKEIEHVKGFCDLYNIALQVKKCDIDIKSESVRLGVSIEELARKCRYNALENALKENDANYIALAHNENDQIETIIMRFFQGSFLDGLSGIPGVNKNIIRPLLEVSRLEIENFLSLNNISFFVDSTNAQDLYLRNRVRNNLLPSIEKIFKGYQKCLKRISEFSKEFVDYFEKDEFFPVEKGKYYYSFDLKTFLNFPKYLVFRLIFKILNSEGIVAKVSYKALNEAFKVEINRKKNNVLLKTNDFFLEKRHNKINLIFKRDEKFYKPFDFILEVGKWHSLSLGKILLKCLECNTSSVSRLKCCSYEFRYKFFKDRFKAKKFFSKFIRCNPIYLMLLALDNRLIGIIDLNTLNLVWSEKSILKKISISLIGGLLKE.

Residue 31–36 (SGGADS) participates in ATP binding.

This sequence belongs to the tRNA(Ile)-lysidine synthase family.

Its subcellular location is the cytoplasm. It carries out the reaction cytidine(34) in tRNA(Ile2) + L-lysine + ATP = lysidine(34) in tRNA(Ile2) + AMP + diphosphate + H(+). Functionally, ligates lysine onto the cytidine present at position 34 of the AUA codon-specific tRNA(Ile) that contains the anticodon CAU, in an ATP-dependent manner. Cytidine is converted to lysidine, thus changing the amino acid specificity of the tRNA from methionine to isoleucine. This is tRNA(Ile)-lysidine synthase from Borrelia garinii subsp. bavariensis (strain ATCC BAA-2496 / DSM 23469 / PBi) (Borreliella bavariensis).